The sequence spans 208 residues: Uridine kinase (208 aa).

Position 11–18 (11–18 (GGTGSGKS)) interacts with ATP.

The protein belongs to the uridine kinase family.

The protein resides in the cytoplasm. The catalysed reaction is uridine + ATP = UMP + ADP + H(+). It carries out the reaction cytidine + ATP = CMP + ADP + H(+). It participates in pyrimidine metabolism; CTP biosynthesis via salvage pathway; CTP from cytidine: step 1/3. The protein operates within pyrimidine metabolism; UMP biosynthesis via salvage pathway; UMP from uridine: step 1/1. This Clostridium perfringens (strain SM101 / Type A) protein is Uridine kinase.